Here is a 124-residue protein sequence, read N- to C-terminus: Protein Rev (124 aa).

S5 carries the post-translational modification Phosphoserine; by host CK2. Positions 19–27 (IIKILYQSN) are homomultimerization. Positions 25 to 51 (QSNPYPSPEGTRKARRNRRRRWRARQK) are disordered. Positions 35–51 (TRKARRNRRRRWRARQK) match the Nuclear localization signal and RNA-binding (RRE) motif. Positions 37 to 50 (KARRNRRRRWRARQ) are enriched in basic residues. The short motif at 74 to 85 (LELPELDKLSLQ) is the Nuclear export signal and binding to XPO1 element. Residues 90 to 106 (TQDVGTSNTSQPQTATG) show a composition bias toward polar residues. Residues 90–124 (TQDVGTSNTSQPQTATGETVPAGGNYSILGKGAKN) form a disordered region.

It belongs to the HIV-1 REV protein family. As to quaternary structure, homomultimer; when bound to the RRE. Multimeric assembly is essential for activity and may involve XPO1. Binds to human KPNB1, XPO1, TNPO1, RANBP5 and IPO7. Interacts with the viral Integrase. Interacts with human KHDRBS1. Interacts with human NAP1; this interaction decreases Rev multimerization and stimulates its activity. Interacts with human DEAD-box helicases DDX3 and DDX24; these interactions may serve for viral RNA export to the cytoplasm and packaging, respectively. Interacts with human PSIP1; this interaction may inhibit HIV-1 DNA integration by promoting dissociation of the Integrase-LEDGF/p75 complex. In terms of processing, asymmetrically arginine dimethylated at one site by host PRMT6. Methylation impairs the RNA-binding activity and export of viral RNA from the nucleus to the cytoplasm. Phosphorylated by protein kinase CK2. Presence of, and maybe binding to the N-terminus of the regulatory beta subunit of CK2 is necessary for CK2-mediated Rev's phosphorylation.

Its subcellular location is the host nucleus. It localises to the host nucleolus. The protein localises to the host cytoplasm. Functionally, escorts unspliced or incompletely spliced viral pre-mRNAs (late transcripts) out of the nucleus of infected cells. These pre-mRNAs carry a recognition sequence called Rev responsive element (RRE) located in the env gene, that is not present in fully spliced viral mRNAs (early transcripts). This function is essential since most viral proteins are translated from unspliced or partially spliced pre-mRNAs which cannot exit the nucleus by the pathway used by fully processed cellular mRNAs. Rev itself is translated from a fully spliced mRNA that readily exits the nucleus. Rev's nuclear localization signal (NLS) binds directly to KPNB1/Importin beta-1 without previous binding to KPNA1/Importin alpha-1. KPNB1 binds to the GDP bound form of RAN (Ran-GDP) and targets Rev to the nucleus. In the nucleus, the conversion from Ran-GDP to Ran-GTP dissociates Rev from KPNB1 and allows Rev's binding to the RRE in viral pre-mRNAs. Rev multimerization on the RRE via cooperative assembly exposes its nuclear export signal (NES) to the surface. Rev can then form a complex with XPO1/CRM1 and Ran-GTP, leading to nuclear export of the complex. Conversion from Ran-GTP to Ran-GDP mediates dissociation of the Rev/RRE/XPO1/RAN complex, so that Rev can return to the nucleus for a subsequent round of export. Beside KPNB1, also seems to interact with TNPO1/Transportin-1, RANBP5/IPO5 and IPO7/RANBP7 for nuclear import. The nucleoporin-like HRB/RIP is an essential cofactor that probably indirectly interacts with Rev to release HIV RNAs from the perinuclear region to the cytoplasm. The protein is Protein Rev of Pan (chimpanzees).